The chain runs to 169 residues: uncharacterized protein (169 aa).

An HD domain is found at 18–130 (VVEHCLAVSE…VAHADNLIFG (113 aa)).

This is an uncharacterized protein from Methanocaldococcus jannaschii (strain ATCC 43067 / DSM 2661 / JAL-1 / JCM 10045 / NBRC 100440) (Methanococcus jannaschii).